The following is a 273-amino-acid chain: 2-dehydro-3-deoxyphosphooctonate aldolase (273 aa).

Belongs to the KdsA family.

It localises to the cytoplasm. It catalyses the reaction D-arabinose 5-phosphate + phosphoenolpyruvate + H2O = 3-deoxy-alpha-D-manno-2-octulosonate-8-phosphate + phosphate. It functions in the pathway carbohydrate biosynthesis; 3-deoxy-D-manno-octulosonate biosynthesis; 3-deoxy-D-manno-octulosonate from D-ribulose 5-phosphate: step 2/3. Its pathway is bacterial outer membrane biogenesis; lipopolysaccharide biosynthesis. The protein is 2-dehydro-3-deoxyphosphooctonate aldolase of Nitratidesulfovibrio vulgaris (strain ATCC 29579 / DSM 644 / CCUG 34227 / NCIMB 8303 / VKM B-1760 / Hildenborough) (Desulfovibrio vulgaris).